Here is a 230-residue protein sequence, read N- to C-terminus: MPGPHSPNPGVGTNGPAPYPEPSSHEPQALDYPHDLGAAEPAFAPGPADDAALPPAAYPGVPPQVSYPKRRHKRLLIGIVVALALVSAMTAAIIYGVRTNGANTAGTFSEGPAKTAIQGYLNALENRDVDTIVRNALCGIHDGVRDKRSDQALAKLSSDAFRKQFSQVEVTSIDKIVYWSQYQAQVLFTMQVTPAAGGPPRGQVQGIAQLLFQRGQVLVCSYVLRTAGSY.

The disordered stretch occupies residues 1 to 57 (MPGPHSPNPGVGTNGPAPYPEPSSHEPQALDYPHDLGAAEPAFAPGPADDAALPPAA). The span at 38–55 (AAEPAFAPGPADDAALPP) shows a compositional bias: low complexity. A helical transmembrane segment spans residues 75 to 95 (LLIGIVVALALVSAMTAAIIY).

It localises to the membrane. This is an uncharacterized protein from Mycobacterium tuberculosis (strain CDC 1551 / Oshkosh).